The primary structure comprises 905 residues: Microtubule-associated protein 10 (905 aa).

Disordered regions lie at residues Ala-30–Arg-51, Thr-199–Gly-235, Ala-329–His-362, Ser-434–Glu-458, Ser-547–Pro-586, Arg-721–Val-772, and Lys-786–Leu-855. Over residues Glu-34–Glu-43 the composition is skewed to acidic residues. The segment covering Ser-208–Pro-227 has biased composition (low complexity). Over residues Cys-443–Ser-453 the composition is skewed to basic and acidic residues. Over residues Ala-567 to Ile-579 the composition is skewed to polar residues. Residues Arg-721 to Lys-736 are compositionally biased toward basic and acidic residues. The segment covering His-737–Gly-748 has biased composition (polar residues). Over residues Glu-790–Ser-801 the composition is skewed to low complexity. Over residues Ser-830 to Leu-855 the composition is skewed to polar residues.

In terms of assembly, interacts (via middle region) with microtubules. Expressed in different cell lines (at protein level).

The protein localises to the cytoplasm. Its subcellular location is the cytoskeleton. It is found in the spindle pole. It localises to the microtubule organizing center. The protein resides in the centrosome. The protein localises to the midbody. In terms of biological role, microtubule-associated protein (MAP) that plays a role in the regulation of cell division; promotes microtubule stability and participates in the organization of the spindle midzone and normal progress of cytokinesis. The sequence is that of Microtubule-associated protein 10 (MAP10) from Homo sapiens (Human).